A 467-amino-acid polypeptide reads, in one-letter code: MSDDTTQIEPAMAQETSPRANTRKVFVKTYGCQMNVYDSQRMADSLAAEGYVATDTPDDADLVLLNTCHIREKASEKLYSALGRLRKMRDARAADGKELTIGVAGCVAQAEGQEILRRAPNVDLVIGPQTYHRLPNALARVRGGEKVVETDYAIEDKFEHLPAPRREETRKRGVSAFLTVQEGCDKFCTFCVVPYTRGSEVSRSVKQIVAEAERLADSGVRELTLLGQNVNAWHGEGEDGREWGLGELLFRLARIPGIARLRYTTSHPRDMDDSLIAAHRDLRQLMPYLHLPVQSGSDRILKAMNRRHKADEYLRLIERIRNVRPDMALSGDFIVGFPGETDQDFEDTMQLVRDVNYAQAYSFKYSPRPGTPGADLDDHVEEAVKDERLQRLQALLSAQQYAFQDSMIGRKMDVLLEKPGREAGQMVGRSPWLLPVIIDDNKDRVGDIIHVKIVSTGTNSLIAQKLA.

Positions 1–20 are disordered; that stretch reads MSDDTTQIEPAMAQETSPRA. The MTTase N-terminal domain maps to 23–143; sequence RKVFVKTYGC…LPNALARVRG (121 aa). Residues Cys-32, Cys-68, Cys-106, Cys-184, Cys-188, and Cys-191 each coordinate [4Fe-4S] cluster. The Radical SAM core domain maps to 170-402; that stretch reads RKRGVSAFLT…QALLSAQQYA (233 aa). Positions 405–467 constitute a TRAM domain; it reads DSMIGRKMDV…TNSLIAQKLA (63 aa).

It belongs to the methylthiotransferase family. MiaB subfamily. In terms of assembly, monomer. [4Fe-4S] cluster is required as a cofactor.

Its subcellular location is the cytoplasm. The enzyme catalyses N(6)-dimethylallyladenosine(37) in tRNA + (sulfur carrier)-SH + AH2 + 2 S-adenosyl-L-methionine = 2-methylsulfanyl-N(6)-dimethylallyladenosine(37) in tRNA + (sulfur carrier)-H + 5'-deoxyadenosine + L-methionine + A + S-adenosyl-L-homocysteine + 2 H(+). In terms of biological role, catalyzes the methylthiolation of N6-(dimethylallyl)adenosine (i(6)A), leading to the formation of 2-methylthio-N6-(dimethylallyl)adenosine (ms(2)i(6)A) at position 37 in tRNAs that read codons beginning with uridine. This Brucella abortus (strain S19) protein is tRNA-2-methylthio-N(6)-dimethylallyladenosine synthase.